A 117-amino-acid chain; its full sequence is Immunoglobulin lambda variable 7-46 (117 aa).

The signal sequence occupies residues 1 to 19 (MAWTPLFLFLLTCCPGSNS). The tract at residues 20-44 (QAVVTQEPSLTVSPGGTVTLTCGSS) is framework-1. The region spanning 20–117 (QAVVTQEPSL…YCLLSYSGAR (98 aa)) is the Ig-like domain. An intrachain disulfide couples C41 to C109. The segment at 45–53 (TGAVTSGHY) is complementarity-determining-1. Residues 54–70 (PYWFQQKPGQAPRTLIY) are framework-2. The interval 71-73 (DTS) is complementarity-determining-2. The interval 74-109 (NKHSWTPARFSGSLLGGKAALTLLGAQPEDEAEYYC) is framework-3. A complementarity-determining-3 region spans residues 110–117 (LLSYSGAR).

As to quaternary structure, immunoglobulins are composed of two identical heavy chains and two identical light chains; disulfide-linked.

Its subcellular location is the secreted. It is found in the cell membrane. V region of the variable domain of immunoglobulin light chains that participates in the antigen recognition. Immunoglobulins, also known as antibodies, are membrane-bound or secreted glycoproteins produced by B lymphocytes. In the recognition phase of humoral immunity, the membrane-bound immunoglobulins serve as receptors which, upon binding of a specific antigen, trigger the clonal expansion and differentiation of B lymphocytes into immunoglobulins-secreting plasma cells. Secreted immunoglobulins mediate the effector phase of humoral immunity, which results in the elimination of bound antigens. The antigen binding site is formed by the variable domain of one heavy chain, together with that of its associated light chain. Thus, each immunoglobulin has two antigen binding sites with remarkable affinity for a particular antigen. The variable domains are assembled by a process called V-(D)-J rearrangement and can then be subjected to somatic hypermutations which, after exposure to antigen and selection, allow affinity maturation for a particular antigen. The protein is Immunoglobulin lambda variable 7-46 of Homo sapiens (Human).